The following is a 492-amino-acid chain: Protein nucleotidyltransferase YdiU (492 aa).

The ATP site is built by Gly95, Gly97, Arg98, Lys118, Asp130, Gly131, Arg181, and Arg188. Asp257 acts as the Proton acceptor in catalysis. Mg(2+)-binding residues include Asn258 and Asp267. Residue Asp267 coordinates ATP. The span at 466 to 475 shows a compositional bias: basic and acidic residues; sequence YDDQPEHAEY. The tract at residues 466–492 is disordered; it reads YDDQPEHAEYRQPPPPSEKPYQTFCGT.

Belongs to the SELO family. The cofactor is Mg(2+). Requires Mn(2+) as cofactor.

The catalysed reaction is L-seryl-[protein] + ATP = 3-O-(5'-adenylyl)-L-seryl-[protein] + diphosphate. It catalyses the reaction L-threonyl-[protein] + ATP = 3-O-(5'-adenylyl)-L-threonyl-[protein] + diphosphate. It carries out the reaction L-tyrosyl-[protein] + ATP = O-(5'-adenylyl)-L-tyrosyl-[protein] + diphosphate. The enzyme catalyses L-histidyl-[protein] + UTP = N(tele)-(5'-uridylyl)-L-histidyl-[protein] + diphosphate. The catalysed reaction is L-seryl-[protein] + UTP = O-(5'-uridylyl)-L-seryl-[protein] + diphosphate. It catalyses the reaction L-tyrosyl-[protein] + UTP = O-(5'-uridylyl)-L-tyrosyl-[protein] + diphosphate. Its function is as follows. Nucleotidyltransferase involved in the post-translational modification of proteins. It can catalyze the addition of adenosine monophosphate (AMP) or uridine monophosphate (UMP) to a protein, resulting in modifications known as AMPylation and UMPylation. The chain is Protein nucleotidyltransferase YdiU from Syntrophotalea carbinolica (strain DSM 2380 / NBRC 103641 / GraBd1) (Pelobacter carbinolicus).